Consider the following 294-residue polypeptide: Ventral anterior homeobox 2b (294 aa).

Residues 1–10 (MGDGVSEERS) show a composition bias toward basic and acidic residues. 5 disordered regions span residues 1–27 (MGDG…VRDR), 43–65 (KDIP…DSQS), 149–168 (RRTK…SSST), 190–223 (PAPP…PVIS), and 272–294 (SSAF…KSTS). The homeobox DNA-binding region spans 98–157 (PKRTRTSFTAEQLYRLELEFQRCQYVVGRERTELARQLNLSETQVKVWFQNRRTKQKKDQ). A compositionally biased stretch (basic and acidic residues) spans 154-165 (KKDQSRDSEKRS). A compositionally biased stretch (low complexity) spans 197-219 (SSQNNMGTSSGNGTSLGTSGSTS). A compositionally biased stretch (basic and acidic residues) spans 279–288 (TRLDRKDTAS).

This sequence belongs to the EMX homeobox family.

The protein localises to the nucleus. Transcription factor that may function in dorsoventral specification of the forebrain. Regulates the expression of Wnt signaling antagonists. The sequence is that of Ventral anterior homeobox 2b (vax2-b) from Xenopus laevis (African clawed frog).